Reading from the N-terminus, the 222-residue chain is Ribosomal RNA small subunit methyltransferase G (222 aa).

S-adenosyl-L-methionine is bound by residues Gly84, Phe89, 141–142 (VE), and Arg154.

Belongs to the methyltransferase superfamily. RNA methyltransferase RsmG family.

Its subcellular location is the cytoplasm. It carries out the reaction guanosine(527) in 16S rRNA + S-adenosyl-L-methionine = N(7)-methylguanosine(527) in 16S rRNA + S-adenosyl-L-homocysteine. In terms of biological role, specifically methylates the N7 position of guanine in position 527 of 16S rRNA. The chain is Ribosomal RNA small subunit methyltransferase G from Bradyrhizobium sp. (strain ORS 278).